The primary structure comprises 572 residues: Secreted triacylglycerol lipase LIP6 (572 aa).

The N-terminal stretch at 1 to 23 is a signal peptide; the sequence is MYSTSLLRWLVVALVSAVPLVTA. A disulfide bridge links C117 with C291. S202 (nucleophile) is an active-site residue. D351 is a catalytic residue. A glycan (N-linked (GlcNAc...) asparagine) is linked at N360. The active site involves H385. A disordered region spans residues 468 to 572; it reads KGGVWNDVLK…SSRRHVARFM (105 aa). Positions 491-511 are enriched in basic and acidic residues; sequence PESKKATKKYKSESKAEKKQP. Residues 512 to 525 are compositionally biased toward low complexity; it reads DSIPSSSSKSSSDN. N525 carries N-linked (GlcNAc...) asparagine glycosylation. A compositionally biased stretch (basic residues) spans 528-540; sequence AHAKYHAHGHGHG. Residues 541–562 show a composition bias toward low complexity; sequence HASSNSNNGHSHSAKESSTSKG. The span at 563–572 shows a compositional bias: basic residues; it reads SSRRHVARFM.

The protein belongs to the AB hydrolase superfamily. Lipase family. Class Lip subfamily.

The protein resides in the secreted. It is found in the cell wall. The catalysed reaction is a triacylglycerol + H2O = a diacylglycerol + a fatty acid + H(+). It carries out the reaction a monoacylglycerol + H2O = glycerol + a fatty acid + H(+). The enzyme catalyses a diacylglycerol + H2O = a monoacylglycerol + a fatty acid + H(+). In terms of biological role, secreted lipase involved in Dandruff and seborrheic dermatitis (D/SD) probably via lipase-mediated breakdown of sebaceous lipids and release of irritating free fatty acids. Shows only minimal activity against triolein. Mostly converts monoolein to di- and triolein, while free fatty acids are only produced in low amounts. This chain is Secreted triacylglycerol lipase LIP6, found in Malassezia globosa (strain ATCC MYA-4612 / CBS 7966) (Dandruff-associated fungus).